The chain runs to 347 residues: GMP reductase (347 aa).

NADP(+) is bound at residue Ala-108–Ala-131. 2 residues coordinate K(+): Gly-181 and Gly-183. Cys-186 serves as the catalytic Thioimidate intermediate. Residue Ile-216 to Val-239 participates in NADP(+) binding.

The protein belongs to the IMPDH/GMPR family. GuaC type 1 subfamily. In terms of assembly, homotetramer.

The enzyme catalyses IMP + NH4(+) + NADP(+) = GMP + NADPH + 2 H(+). Catalyzes the irreversible NADPH-dependent deamination of GMP to IMP. It functions in the conversion of nucleobase, nucleoside and nucleotide derivatives of G to A nucleotides, and in maintaining the intracellular balance of A and G nucleotides. The protein is GMP reductase of Yersinia pestis bv. Antiqua (strain Antiqua).